Reading from the N-terminus, the 228-residue chain is Uracil-DNA glycosylase (228 aa).

Catalysis depends on Asp-71, which acts as the Proton acceptor.

Belongs to the uracil-DNA glycosylase (UDG) superfamily. UNG family.

It localises to the cytoplasm. It carries out the reaction Hydrolyzes single-stranded DNA or mismatched double-stranded DNA and polynucleotides, releasing free uracil.. Excises uracil residues from the DNA which can arise as a result of misincorporation of dUMP residues by DNA polymerase or due to deamination of cytosine. The sequence is that of Uracil-DNA glycosylase from Thermobifida fusca (strain YX).